Reading from the N-terminus, the 421-residue chain is Subtilisin-like protease 2 (421 aa).

The N-terminal stretch at 1–16 (MQLLNFGLLLLPFVAG) is a signal peptide. Residues 17 to 122 (DLAPQPEPLL…VHPDQHFYLA (106 aa)) constitute a propeptide that is removed on maturation. The Inhibitor I9 domain maps to 36-121 (QYLVTLKEGL…SVHPDQHFYL (86 aa)). Residues 131 to 421 (RWGLGYMSSK…ERKCKLPKYY (291 aa)) enclose the Peptidase S8 domain. Catalysis depends on Asp-169, which acts as the Charge relay system. Asn-192 carries N-linked (GlcNAc...) asparagine glycosylation. His-201 (charge relay system) is an active-site residue. N-linked (GlcNAc...) asparagine glycosylation is found at Asn-248, Asn-261, and Asn-348. Ser-357 (charge relay system) is an active-site residue. A glycan (N-linked (GlcNAc...) asparagine) is linked at Asn-388.

Belongs to the peptidase S8 family.

The protein resides in the secreted. Secreted subtilisin-like serine protease with keratinolytic activity that contributes to pathogenicity. This is Subtilisin-like protease 2 (SUB2) from Trichophyton rubrum (Athlete's foot fungus).